The following is a 342-amino-acid chain: MSVENVERLSPEQADAFFGQSSVDLISRALGGQVLGCSDDFFASCENLINPADPIRKAGVFVETGAWYDGWETRRHNTAPCDWVIVKLGPSSGRVTGCEIDTTFFNGNHAPEVSVEAAFLPEGNPDAKTNWTPILPKLPCGPTQRHIYRFKEIPQQNFTHVRLCMYPDGGIARFRLYGNVVPVFPADLDARLDLAHMYLGGLVVQCSDQHFGKKDNLLLPGRGVNMGDGWETARSREKGHVDWVIVKLGARGYIDDALIDTNHFKGNYPKEVILEAIDSPDHIPGPDAQWVTILPARKLGPHMEHVFTNLQNNSTPMTHVRMIIIPDGGVKRLRIYGRRAAN.

The protein belongs to the allantoicase family.

It carries out the reaction allantoate + H2O = (S)-ureidoglycolate + urea. It participates in nitrogen metabolism; (S)-allantoin degradation; (S)-ureidoglycolate from allantoate (aminidohydrolase route): step 1/1. Its function is as follows. Utilization of purines as secondary nitrogen sources, when primary sources are limiting. The protein is Probable allantoicase of Schizosaccharomyces pombe (strain 972 / ATCC 24843) (Fission yeast).